The following is a 234-amino-acid chain: Probable pectate lyase F (234 aa).

A signal peptide spans 1–17 (MWSSIAAFPVLVPVALA).

It belongs to the polysaccharide lyase 3 family. The cofactor is Ca(2+).

The protein localises to the secreted. It catalyses the reaction Eliminative cleavage of (1-&gt;4)-alpha-D-galacturonan to give oligosaccharides with 4-deoxy-alpha-D-galact-4-enuronosyl groups at their non-reducing ends.. In terms of biological role, pectinolytic enzyme consist of four classes of enzymes: pectin lyase, polygalacturonase, pectin methylesterase and rhamnogalacturonase. Among pectinolytic enzymes, pectin lyase is the most important in depolymerization of pectin, since it cleaves internal glycosidic bonds of highly methylated pectins. Favors pectate, the anion, over pectin, the methyl ester. In Aspergillus fumigatus (strain ATCC MYA-4609 / CBS 101355 / FGSC A1100 / Af293) (Neosartorya fumigata), this protein is Probable pectate lyase F (plyF).